The primary structure comprises 268 residues: Tryptophan synthase alpha chain (268 aa).

Residues glutamate 49 and aspartate 60 each act as proton acceptor in the active site.

It belongs to the TrpA family. As to quaternary structure, tetramer of two alpha and two beta chains.

The enzyme catalyses (1S,2R)-1-C-(indol-3-yl)glycerol 3-phosphate + L-serine = D-glyceraldehyde 3-phosphate + L-tryptophan + H2O. The protein operates within amino-acid biosynthesis; L-tryptophan biosynthesis; L-tryptophan from chorismate: step 5/5. The alpha subunit is responsible for the aldol cleavage of indoleglycerol phosphate to indole and glyceraldehyde 3-phosphate. The sequence is that of Tryptophan synthase alpha chain from Mannheimia succiniciproducens (strain KCTC 0769BP / MBEL55E).